A 164-amino-acid chain; its full sequence is Peptidyl-prolyl cis-trans isomerase A-like 4C (164 aa).

Positions 7 to 163 (FFDITVDGKP…KKITIADCGQ (157 aa)) constitute a PPIase cyclophilin-type domain.

The protein belongs to the cyclophilin-type PPIase family. PPIase A subfamily.

Its subcellular location is the cytoplasm. It carries out the reaction [protein]-peptidylproline (omega=180) = [protein]-peptidylproline (omega=0). Its function is as follows. PPIases accelerate the folding of proteins. It catalyzes the cis-trans isomerization of proline imidic peptide bonds in oligopeptides. This is Peptidyl-prolyl cis-trans isomerase A-like 4C from Homo sapiens (Human).